We begin with the raw amino-acid sequence, 496 residues long: GTPase Der (496 aa).

2 consecutive EngA-type G domains span residues 3-166 (PVVA…FDNL) and 208-381 (IKLA…RSAT). Residues 9 to 16 (GRPNVGKS), 56 to 60 (DTGGI), 118 to 121 (NKVD), 214 to 221 (GRPNVGKS), 261 to 265 (DTAGV), and 326 to 329 (NKWD) each bind GTP. One can recognise a KH-like domain in the interval 382-466 (TRVGTSVLTR…PIRIQFQNSD (85 aa)).

The protein belongs to the TRAFAC class TrmE-Era-EngA-EngB-Septin-like GTPase superfamily. EngA (Der) GTPase family. As to quaternary structure, associates with the 50S ribosomal subunit.

Its function is as follows. GTPase that plays an essential role in the late steps of ribosome biogenesis. This Vibrio vulnificus (strain CMCP6) protein is GTPase Der.